A 305-amino-acid chain; its full sequence is N-acetyl-D-glucosamine kinase (305 aa).

ATP-binding positions include 4–11 (GFDIGGTK) and 133–140 (GFGGGLVF). Zn(2+) contacts are provided by histidine 157, cysteine 178, cysteine 180, and cysteine 185.

Belongs to the ROK (NagC/XylR) family. NagK subfamily.

The catalysed reaction is N-acetyl-D-glucosamine + ATP = N-acetyl-D-glucosamine 6-phosphate + ADP + H(+). Its pathway is cell wall biogenesis; peptidoglycan recycling. In terms of biological role, catalyzes the phosphorylation of N-acetyl-D-glucosamine (GlcNAc) derived from cell-wall degradation, yielding GlcNAc-6-P. The sequence is that of N-acetyl-D-glucosamine kinase from Histophilus somni (strain 129Pt) (Haemophilus somnus).